The sequence spans 306 residues: tRNA dimethylallyltransferase 2 (306 aa).

An ATP-binding site is contributed by 19 to 26 (GATASGKT). 21 to 26 (TASGKT) is a binding site for substrate. Residues 44–47 (DSRQ) form an interaction with substrate tRNA region.

Belongs to the IPP transferase family. As to quaternary structure, monomer. Mg(2+) is required as a cofactor.

It carries out the reaction adenosine(37) in tRNA + dimethylallyl diphosphate = N(6)-dimethylallyladenosine(37) in tRNA + diphosphate. Its function is as follows. Catalyzes the transfer of a dimethylallyl group onto the adenine at position 37 in tRNAs that read codons beginning with uridine, leading to the formation of N6-(dimethylallyl)adenosine (i(6)A). The sequence is that of tRNA dimethylallyltransferase 2 from Citrifermentans bemidjiense (strain ATCC BAA-1014 / DSM 16622 / JCM 12645 / Bem) (Geobacter bemidjiensis).